We begin with the raw amino-acid sequence, 311 residues long: Homoserine kinase (311 aa).

88–98 (PEGLGLGSSGA) contributes to the ATP binding site.

Belongs to the GHMP kinase family. Homoserine kinase subfamily.

The protein resides in the cytoplasm. The enzyme catalyses L-homoserine + ATP = O-phospho-L-homoserine + ADP + H(+). The protein operates within amino-acid biosynthesis; L-threonine biosynthesis; L-threonine from L-aspartate: step 4/5. Catalyzes the ATP-dependent phosphorylation of L-homoserine to L-homoserine phosphate. The chain is Homoserine kinase from Saccharolobus solfataricus (strain ATCC 35092 / DSM 1617 / JCM 11322 / P2) (Sulfolobus solfataricus).